A 260-amino-acid polypeptide reads, in one-letter code: Voltage-dependent calcium channel gamma-6 subunit (260 aa).

4 helical membrane passes run 43-63 (LLVA…EFWV), 143-163 (VIAV…IMVL), 169-189 (FLLR…FVSL), and 221-241 (LGCG…FLLL).

It belongs to the PMP-22/EMP/MP20 family. CACNG subfamily. Interacts with CACNA1C. Identified in a complex with the L-type calcium channel subunits CACNA1C, CACNA2D1 and either CACNB1 or CACNB2. In terms of tissue distribution, detected in heart atrium and ventricle, aorta and skeletal muscle. Detected in heart left ventricle.

The protein resides in the cell membrane. Regulates the activity of L-type calcium channels that contain CACNA1C as pore-forming subunit. This Rattus norvegicus (Rat) protein is Voltage-dependent calcium channel gamma-6 subunit (Cacng6).